The primary structure comprises 327 residues: GMP reductase (327 aa).

Residue cysteine 176 is the Thioimidate intermediate of the active site. Isoleucine 205 to valine 228 is an NADP(+) binding site.

Belongs to the IMPDH/GMPR family. GuaC type 2 subfamily.

The enzyme catalyses IMP + NH4(+) + NADP(+) = GMP + NADPH + 2 H(+). Functionally, catalyzes the irreversible NADPH-dependent deamination of GMP to IMP. It functions in the conversion of nucleobase, nucleoside and nucleotide derivatives of G to A nucleotides, and in maintaining the intracellular balance of A and G nucleotides. The protein is GMP reductase of Streptococcus agalactiae serotype III (strain NEM316).